Reading from the N-terminus, the 324-residue chain is MKQVNGEKLLASLGDGVKDIRGRITPDAPMDRVTWFRAGGLAELMFQPHDIDDLVAFLKILPEEVPLTVVGVGSNILVRDGGIPGVVLRLSAKGFGFVELAGENRILAGAICPDKHVAAMAMDNGIGGFHFFYGIPGGIGGAARMNAGANGVETRERLIEVHAVDRKGDKHVLSNAEMGYSYRHSTASTDLIFTSVLFEGYPEERAQIRAEMDAVRNHRETVQPVREKTGGSTFKNPAGHSAWKLIDEAGCRGLVIGGAQMSSLHCNFMINMGQATGYDLEYLGEQVRREVFEKDGIKLEWEIKRLGVFMPGREVRPFHGVTSE.

Positions 36 to 203 constitute an FAD-binding PCMH-type domain; the sequence is FRAGGLAELM…TSVLFEGYPE (168 aa). Arg-183 is an active-site residue. The active-site Proton donor is the Ser-232. Glu-302 is an active-site residue.

Belongs to the MurB family. The cofactor is FAD.

The protein resides in the cytoplasm. It catalyses the reaction UDP-N-acetyl-alpha-D-muramate + NADP(+) = UDP-N-acetyl-3-O-(1-carboxyvinyl)-alpha-D-glucosamine + NADPH + H(+). Its pathway is cell wall biogenesis; peptidoglycan biosynthesis. Its function is as follows. Cell wall formation. In Rhizobium johnstonii (strain DSM 114642 / LMG 32736 / 3841) (Rhizobium leguminosarum bv. viciae), this protein is UDP-N-acetylenolpyruvoylglucosamine reductase.